We begin with the raw amino-acid sequence, 729 residues long: Fatty acid oxidation complex subunit alpha (729 aa).

The tract at residues 1 to 189 is enoyl-CoA hydratase/isomerase; it reads MLYKGDTLYL…KIGLVDGVVK (189 aa). Residue D296 coordinates substrate. The tract at residues 311 to 729 is 3-hydroxyacyl-CoA dehydrogenase; that stretch reads ETPKQAAVLG…ARPVGDLKTA (419 aa). NAD(+) contacts are provided by residues M324, D343, 400–402, K407, and S429; that span reads VVE. The active-site For 3-hydroxyacyl-CoA dehydrogenase activity is H450. N453 contacts NAD(+). Residues N500 and Y660 each coordinate substrate. The segment at 708–729 is disordered; the sequence is RHNEPYYPPVEPARPVGDLKTA.

In the N-terminal section; belongs to the enoyl-CoA hydratase/isomerase family. It in the C-terminal section; belongs to the 3-hydroxyacyl-CoA dehydrogenase family. Heterotetramer of two alpha chains (FadB) and two beta chains (FadA).

It catalyses the reaction a (3S)-3-hydroxyacyl-CoA + NAD(+) = a 3-oxoacyl-CoA + NADH + H(+). It carries out the reaction a (3S)-3-hydroxyacyl-CoA = a (2E)-enoyl-CoA + H2O. The enzyme catalyses a 4-saturated-(3S)-3-hydroxyacyl-CoA = a (3E)-enoyl-CoA + H2O. The catalysed reaction is (3S)-3-hydroxybutanoyl-CoA = (3R)-3-hydroxybutanoyl-CoA. It catalyses the reaction a (3Z)-enoyl-CoA = a 4-saturated (2E)-enoyl-CoA. It carries out the reaction a (3E)-enoyl-CoA = a 4-saturated (2E)-enoyl-CoA. It functions in the pathway lipid metabolism; fatty acid beta-oxidation. Functionally, involved in the aerobic and anaerobic degradation of long-chain fatty acids via beta-oxidation cycle. Catalyzes the formation of 3-oxoacyl-CoA from enoyl-CoA via L-3-hydroxyacyl-CoA. It can also use D-3-hydroxyacyl-CoA and cis-3-enoyl-CoA as substrate. This is Fatty acid oxidation complex subunit alpha from Escherichia coli O7:K1 (strain IAI39 / ExPEC).